Here is a 429-residue protein sequence, read N- to C-terminus: Histidine--tRNA ligase (429 aa).

This sequence belongs to the class-II aminoacyl-tRNA synthetase family. As to quaternary structure, homodimer.

It localises to the cytoplasm. The enzyme catalyses tRNA(His) + L-histidine + ATP = L-histidyl-tRNA(His) + AMP + diphosphate + H(+). This Pseudomonas savastanoi pv. phaseolicola (strain 1448A / Race 6) (Pseudomonas syringae pv. phaseolicola (strain 1448A / Race 6)) protein is Histidine--tRNA ligase.